The sequence spans 438 residues: Tol-Pal system protein TolB (438 aa).

Positions 1-35 (MITMKNILKLRATGLLLLLLLMISVLGNGIGQAMA) are cleaved as a signal peptide.

Belongs to the TolB family. The Tol-Pal system is composed of five core proteins: the inner membrane proteins TolA, TolQ and TolR, the periplasmic protein TolB and the outer membrane protein Pal. They form a network linking the inner and outer membranes and the peptidoglycan layer.

The protein localises to the periplasm. In terms of biological role, part of the Tol-Pal system, which plays a role in outer membrane invagination during cell division and is important for maintaining outer membrane integrity. The protein is Tol-Pal system protein TolB of Desulfotalea psychrophila (strain LSv54 / DSM 12343).